The following is a 260-amino-acid chain: Large ribosomal subunit protein uL2 (260 aa).

The segment at Glu208–Ser230 is disordered.

Belongs to the universal ribosomal protein uL2 family.

The protein localises to the cytoplasm. The chain is Large ribosomal subunit protein uL2 from Caenorhabditis elegans.